A 505-amino-acid chain; its full sequence is Pup deamidase/depupylase (505 aa).

6–10 (GTEVE) contacts ATP. Residues E8 and Y93 each contribute to the Mg(2+) site. D95 functions as the Proton acceptor in the catalytic mechanism. E100 serves as a coordination point for Mg(2+). 102 to 103 (SA) is an ATP binding site. A Mg(2+)-binding site is contributed by H156. Residues N158 and R240 each coordinate ATP. H242 is a binding site for Mg(2+).

It belongs to the Pup ligase/Pup deamidase family. Pup deamidase subfamily. As to quaternary structure, interacts with the prokaryotic ubiquitin-like protein Pup. Requires ATP as cofactor.

It catalyses the reaction [prokaryotic ubiquitin-like protein]-C-terminal-L-glutamine + H2O = [prokaryotic ubiquitin-like protein]-C-terminal-L-glutamate + NH4(+). It participates in protein degradation; proteasomal Pup-dependent pathway. Its function is as follows. Specifically catalyzes the deamidation of the C-terminal glutamine of the prokaryotic ubiquitin-like protein Pup to glutamate, thereby rendering Pup competent for conjugation. Also displays depupylase (DPUP) activity, removing conjugated Pup from target proteins; is thus involved in the recycling of Pup and may function similarly to deubiquitinases (DUBs) in eukaryotes to prevent or promote proteasomal degradation of certain proteins. The sequence is that of Pup deamidase/depupylase (dop) from Mycobacterium tuberculosis (strain CDC 1551 / Oshkosh).